Here is a 190-residue protein sequence, read N- to C-terminus: Threonylcarbamoyl-AMP synthase (190 aa).

One can recognise a YrdC-like domain in the interval 7–190; it reads TGSIAAAVDL…ALTGELFRQG (184 aa).

Belongs to the SUA5 family. TsaC subfamily.

Its subcellular location is the cytoplasm. The enzyme catalyses L-threonine + hydrogencarbonate + ATP = L-threonylcarbamoyladenylate + diphosphate + H2O. Its function is as follows. Required for the formation of a threonylcarbamoyl group on adenosine at position 37 (t(6)A37) in tRNAs that read codons beginning with adenine. Catalyzes the conversion of L-threonine, HCO(3)(-)/CO(2) and ATP to give threonylcarbamoyl-AMP (TC-AMP) as the acyladenylate intermediate, with the release of diphosphate. This is Threonylcarbamoyl-AMP synthase from Salmonella choleraesuis (strain SC-B67).